A 585-amino-acid chain; its full sequence is FAD-linked oxidoreductase apf9 (585 aa).

An N-terminal signal peptide occupies residues 1 to 19 (MKPHTVSLVLSNLASLAAA). N-linked (GlcNAc...) asparagine glycans are attached at residues N40, N92, and N117. Residues 108–294 (IGNSPVYVVN…TEITVKTYPT (187 aa)) form the FAD-binding PCMH-type domain. H145 bears the Pros-8alpha-FAD histidine mark. N-linked (GlcNAc...) asparagine glycosylation is found at N352, N412, and N495.

It belongs to the oxygen-dependent FAD-linked oxidoreductase family. FAD is required as a cofactor.

The protein operates within secondary metabolite biosynthesis. FAD-linked oxidoreductase; part of the gene cluster that mediates the biosynthesis of the cyclic tetrapeptide apicidin F (APF). The non-ribosomal peptide synthetase apf1 incorporates four different amino acids to produce apicidin F: L-phenylalanine, D-pipecolic acid (D-pip), N-methoxy-L-tryptophan and L-2-aminooctanedioic acid. L-Phenylalanine is the only proteinogenic amino acid directly used by apf1. The 3 other apf1 substrates are non-proteinogenic and have to be modified by other enzymes of the cluster. Lysine is converted to delta-1-pyrroline-5-carboxylate (P5C) which is reduced to L-pipecolic acid (L-pip) by apf3. L-pip is epimerized to D-pip, probably by apf1 activity, prior to incorporation. L-Tryptophan is N-oxidyzed by one of the cytochrome P450 monooxygenases (apf7 or apf8), and further methylated at the hydroxy group by the O-methyltransferase apf6 to yield N-methoxy-L-tryptophan. The synthesis of the fourth apf1 substrate is more complex. The fatty acid synthase apf5 is involved in the synthesis of the octanoic acid backbone of L-2-aminooctanedioic acid by fixing one acetyl-CoA unit and three malonyl-CoA units. Then one of the cytochrome P450 monooxygenases (apf7 or apf8) may oxidize this backbone to 2-oxooctanoic acid. The aminotransferase apf4 is predicted to catalyze the exchange of the keto group with an amino group. The next step would be the oxidation of 2-aminooctanoic acid by one of the cytochrome P450 monooxygenases (apf7 or apf8). The last step is the oxidation of 2-amino-8-hydroxyoctanoic acid to 2-aminooctanedioic acid is catalyzed by the FAD-dependent monooxygenase apf9. In Gibberella fujikuroi (strain CBS 195.34 / IMI 58289 / NRRL A-6831) (Bakanae and foot rot disease fungus), this protein is FAD-linked oxidoreductase apf9.